A 543-amino-acid chain; its full sequence is CTP synthase (543 aa).

The amidoligase domain stretch occupies residues 1–265 (MARYIFITGG…DGEVLRHFGL (265 aa)). Ser-13 lines the CTP pocket. Residue Ser-13 participates in UTP binding. ATP is bound at residue 14-19 (SLGKGL). An L-glutamine-binding site is contributed by Tyr-54. Residue Asp-71 participates in ATP binding. Residues Asp-71 and Glu-139 each coordinate Mg(2+). Residues 146–148 (DIE), 186–191 (KTKPTQ), and Lys-222 contribute to the CTP site. UTP contacts are provided by residues 186–191 (KTKPTQ) and Lys-222. Positions 290 to 542 (TIGVVGKYVG…IAAAVKQARL (253 aa)) constitute a Glutamine amidotransferase type-1 domain. Gly-354 is an L-glutamine binding site. Residue Cys-381 is the Nucleophile; for glutamine hydrolysis of the active site. L-glutamine-binding positions include 382–385 (LGMQ), Glu-405, and Arg-470. Catalysis depends on residues His-515 and Glu-517.

Belongs to the CTP synthase family. Homotetramer.

It catalyses the reaction UTP + L-glutamine + ATP + H2O = CTP + L-glutamate + ADP + phosphate + 2 H(+). It carries out the reaction L-glutamine + H2O = L-glutamate + NH4(+). The enzyme catalyses UTP + NH4(+) + ATP = CTP + ADP + phosphate + 2 H(+). It functions in the pathway pyrimidine metabolism; CTP biosynthesis via de novo pathway; CTP from UDP: step 2/2. Allosterically activated by GTP, when glutamine is the substrate; GTP has no effect on the reaction when ammonia is the substrate. The allosteric effector GTP functions by stabilizing the protein conformation that binds the tetrahedral intermediate(s) formed during glutamine hydrolysis. Inhibited by the product CTP, via allosteric rather than competitive inhibition. Catalyzes the ATP-dependent amination of UTP to CTP with either L-glutamine or ammonia as the source of nitrogen. Regulates intracellular CTP levels through interactions with the four ribonucleotide triphosphates. This Novosphingobium aromaticivorans (strain ATCC 700278 / DSM 12444 / CCUG 56034 / CIP 105152 / NBRC 16084 / F199) protein is CTP synthase.